The following is a 224-amino-acid chain: Cysteine-rich hydrophobic domain-containing protein 1 (224 aa).

The interval 1 to 80 (MSILLPNMAE…PPPRVVSEEH (80 aa)) is disordered. Acidic residues predominate over residues 13–25 (TISELEEEEEEEA). Low complexity predominate over residues 26 to 40 (ATSSSSPSSSSSVSG). Positions 41-69 (PDDDEEDEEEEEEEEEEEEEEEEEEEEEA) are enriched in acidic residues. Positions 42–70 (DDDEEDEEEEEEEEEEEEEEEEEEEEEAP) form a coiled coil.

It belongs to the CHIC family. In terms of processing, palmitoylated. In terms of tissue distribution, equally expressed in various parts of the brain.

The protein resides in the cell membrane. It localises to the cytoplasmic vesicle. The polypeptide is Cysteine-rich hydrophobic domain-containing protein 1 (CHIC1) (Homo sapiens (Human)).